Here is a 185-residue protein sequence, read N- to C-terminus: Ribosome-recycling factor (185 aa).

The protein belongs to the RRF family.

Its subcellular location is the cytoplasm. Responsible for the release of ribosomes from messenger RNA at the termination of protein biosynthesis. May increase the efficiency of translation by recycling ribosomes from one round of translation to another. In Alteromonas mediterranea (strain DSM 17117 / CIP 110805 / LMG 28347 / Deep ecotype), this protein is Ribosome-recycling factor.